Here is a 184-residue protein sequence, read N- to C-terminus: Elongation factor P (184 aa).

It belongs to the elongation factor P family.

It localises to the cytoplasm. Its pathway is protein biosynthesis; polypeptide chain elongation. Functionally, involved in peptide bond synthesis. Stimulates efficient translation and peptide-bond synthesis on native or reconstituted 70S ribosomes in vitro. Probably functions indirectly by altering the affinity of the ribosome for aminoacyl-tRNA, thus increasing their reactivity as acceptors for peptidyl transferase. The polypeptide is Elongation factor P (Mycoplasma mycoides subsp. mycoides SC (strain CCUG 32753 / NCTC 10114 / PG1)).